Consider the following 154-residue polypeptide: Transcriptional repressor NrdR (154 aa).

The disordered stretch occupies residues 1 to 22 (MRCPFCAHDDSQVKDSRPTDDG). Residues 3-34 (CPFCAHDDSQVKDSRPTDDGAAIRRRRQCEGC) fold into a zinc finger. A compositionally biased stretch (basic and acidic residues) spans 7–22 (AHDDSQVKDSRPTDDG). In terms of domain architecture, ATP-cone spans 49-139 (MTVVKSDGRR…VYKDFREAKD (91 aa)).

The protein belongs to the NrdR family. It depends on Zn(2+) as a cofactor.

Functionally, negatively regulates transcription of bacterial ribonucleotide reductase nrd genes and operons by binding to NrdR-boxes. This is Transcriptional repressor NrdR from Rhizorhabdus wittichii (strain DSM 6014 / CCUG 31198 / JCM 15750 / NBRC 105917 / EY 4224 / RW1) (Sphingomonas wittichii).